The following is a 180-amino-acid chain: ADP-ribosylation factor 5 (180 aa).

Gly2 carries N-myristoyl glycine lipidation. GTP is bound by residues 24–31, 67–71, and 126–129; these read GLDAAGKT, DVGGQ, and NKQD.

Belongs to the small GTPase superfamily. Arf family.

It is found in the golgi apparatus. GTP-binding protein involved in protein trafficking; may modulate vesicle budding and uncoating within the Golgi apparatus. The protein is ADP-ribosylation factor 5 (ARF5) of Gallus gallus (Chicken).